The following is a 36-amino-acid chain: Conotoxin Bu21 (36 aa).

A propeptide spanning residues 1–21 (DGANAEATDNKPGVFERDEKK) is cleaved from the precursor. Disulfide bonds link Cys-22/Cys-28 and Cys-23/Cys-34.

The protein belongs to the conotoxin A superfamily. Expressed by the venom duct.

It localises to the secreted. The protein is Conotoxin Bu21 of Conus bullatus (Bubble cone).